The sequence spans 359 residues: Biotin synthase (359 aa).

The disordered stretch occupies residues 1 to 23 (MSVADSSAADSVAAPDTADTSSS). In terms of domain architecture, Radical SAM core spans 76–302 (YFGNTVQLYF…VNPDRELRIA (227 aa)). Positions 94, 98, and 101 each coordinate [4Fe-4S] cluster. [2Fe-2S] cluster-binding residues include cysteine 138, cysteine 170, cysteine 230, and arginine 300.

This sequence belongs to the radical SAM superfamily. Biotin synthase family. Homodimer. It depends on [4Fe-4S] cluster as a cofactor. [2Fe-2S] cluster is required as a cofactor.

It carries out the reaction (4R,5S)-dethiobiotin + (sulfur carrier)-SH + 2 reduced [2Fe-2S]-[ferredoxin] + 2 S-adenosyl-L-methionine = (sulfur carrier)-H + biotin + 2 5'-deoxyadenosine + 2 L-methionine + 2 oxidized [2Fe-2S]-[ferredoxin]. Its pathway is cofactor biosynthesis; biotin biosynthesis; biotin from 7,8-diaminononanoate: step 2/2. Functionally, catalyzes the conversion of dethiobiotin (DTB) to biotin by the insertion of a sulfur atom into dethiobiotin via a radical-based mechanism. This Rhodopirellula baltica (strain DSM 10527 / NCIMB 13988 / SH1) protein is Biotin synthase.